The primary structure comprises 490 residues: GTPase Der (490 aa).

2 EngA-type G domains span residues Pro3–Met166 and Ile200–Thr373. Residues Gly9–Ser16, Asp56–Ile60, Asn118–Asp121, Gly206–Ser213, Asp253–Val257, and Asn318–Asp321 each bind GTP. The region spanning Arg374–Gly458 is the KH-like domain.

This sequence belongs to the TRAFAC class TrmE-Era-EngA-EngB-Septin-like GTPase superfamily. EngA (Der) GTPase family. Associates with the 50S ribosomal subunit.

GTPase that plays an essential role in the late steps of ribosome biogenesis. This chain is GTPase Der, found in Shewanella piezotolerans (strain WP3 / JCM 13877).